A 956-amino-acid chain; its full sequence is MSEERVIRINKVLRELNISLERAVDYLKDKGIAIDANPNAKISDSEFNILQSQFAGDKGNKEASKEVGEEKRKEKEALRVEREKEIEDKRRQEEERQKQQEIIKARAVVSGPVQVGKIDLNPKKPAAVSPEEPVKAEEPKTVTPTQTEKPVQKETVQSEPVAPVVSEEKKVEKPIITEKKEVKAESSKTAQEPIISTDPTTAEETITTQYQKLSGTTLTGQTIDLSQFNKPKKKKEDPKITPNKPGTPGVGNNNNANKNKRKRIAPKPGTPGAPKPATGNAPGTPNPNKITPNSGGGFNANRNARPGFVKGNRPAIVAKVEPTEEEVKNQIRETLEKLQGKGGKSKAAKYRRDKRETHRQKSDDEQRALDEGSKTIKVTEFVTVGEIAIMMDVPITKVIGTCMSLGIMVTMNQRLDAETLTIVADEFGYDVEFITVDIEEAIEVVEDREEDLVTRAPIVTVMGHVDHGKTSLLDYIRKENVIAGESGGITQHIGAYGVTLDNGQKIAFLDTPGHEAFTAMRARGAQVTDIAIIVIAADDDIMPQTKEAISHAQAAGVPIIFAINKVDKPNANPDKIKERLAGMNLLVEDWGGKIQSHDISAKTGLGVKELLEKVLLEAEILDLKSNPNKAAQGTVVEAYLDKGKGYVSTILVQHGTLKIGDYMLAGKHHGKVKAMHDERGHTVLTAGPSTPVSVLGLDGAATAGDKFNVFEDEKEAKQIASKRSQLMREQSVRTQRHITLDEIGRRIALGQFKELNVILKGDVDGSVEALSDSFSKLSTEEVQINIIHKGVGAITETDVNLASASDAIIIGFNVRPAGNARQLADKEEIDIRYYSIIYAAIDDLKDAMEGMLAPEMKEEVLGTAEIREIFKISKVGSIAGCMVTDGKILRTSKIRVIRDGVVVHTGELVALKRFKDDVKEVTKGYDCGIQIKGFNDIEISDVIEAYHEVAIKKKLK.

Disordered regions lie at residues 53-102 (QFAG…QQEI), 116-315 (GKID…NRPA), and 334-371 (TLEK…ALDE). Residues 58–102 (KGNKEASKEVGEEKRKEKEALRVEREKEIEDKRRQEEERQKQQEI) are compositionally biased toward basic and acidic residues. Over residues 142–158 (VTPTQTEKPVQKETVQS) the composition is skewed to polar residues. Over residues 166–186 (SEEKKVEKPIITEKKEVKAES) the composition is skewed to basic and acidic residues. Low complexity predominate over residues 197–208 (TDPTTAEETITT). Residues 209 to 229 (QYQKLSGTTLTGQTIDLSQFN) show a composition bias toward polar residues. Low complexity predominate over residues 240–257 (ITPNKPGTPGVGNNNNAN). The segment covering 343 to 352 (GKSKAAKYRR) has biased composition (basic residues). Residues 353–371 (DKRETHRQKSDDEQRALDE) are compositionally biased toward basic and acidic residues. One can recognise a tr-type G domain in the interval 454–622 (TRAPIVTVMG…KVLLEAEILD (169 aa)). Residues 463-470 (GHVDHGKT) are G1. A GTP-binding site is contributed by 463–470 (GHVDHGKT). A G2 region spans residues 488 to 492 (GITQH). Positions 510-513 (DTPG) are G3. GTP is bound by residues 510–514 (DTPGH) and 564–567 (NKVD). The G4 stretch occupies residues 564–567 (NKVD). Positions 600 to 602 (SAK) are G5.

The protein belongs to the TRAFAC class translation factor GTPase superfamily. Classic translation factor GTPase family. IF-2 subfamily.

It is found in the cytoplasm. Its function is as follows. One of the essential components for the initiation of protein synthesis. Protects formylmethionyl-tRNA from spontaneous hydrolysis and promotes its binding to the 30S ribosomal subunits. Also involved in the hydrolysis of GTP during the formation of the 70S ribosomal complex. The polypeptide is Translation initiation factor IF-2 (Flavobacterium johnsoniae (strain ATCC 17061 / DSM 2064 / JCM 8514 / BCRC 14874 / CCUG 350202 / NBRC 14942 / NCIMB 11054 / UW101) (Cytophaga johnsonae)).